Reading from the N-terminus, the 252-residue chain is MSDWNPSLYLHFSAERSRPAVELLARVPLENVEYVADLGCGPDNSTALLQQRWPAARITGIDSSPAMIAEARSALPDCQFVEADIRNWQPVQALDLIFANASLQWLPDHYELFPHLVSLLNPQGVLAVQMPDNWLEPTHVLMREVAWEQNYPDRGREPLAGVHAYYDILSEAGCEVDIWRTTYYHQMPSHQAIIDWVTATGLRPWLQDLTESEQQLFLKRYHQMLEEQYPLQENGQILLAFPRLFIVARRME.

Belongs to the methyltransferase superfamily. Tam family.

The protein resides in the cytoplasm. The enzyme catalyses trans-aconitate + S-adenosyl-L-methionine = (E)-3-(methoxycarbonyl)pent-2-enedioate + S-adenosyl-L-homocysteine. In terms of biological role, catalyzes the S-adenosylmethionine monomethyl esterification of trans-aconitate. The polypeptide is Trans-aconitate 2-methyltransferase (Escherichia coli O9:H4 (strain HS)).